The following is a 256-amino-acid chain: L-erythrulose-1-phosphate isomerase (256 aa).

Catalysis depends on His96, which acts as the Electrophile. The Proton acceptor role is filled by Glu169. 2 residues coordinate substrate: Gly175 and Ser212.

It belongs to the triosephosphate isomerase family. Homodimer.

Its subcellular location is the cytoplasm. It catalyses the reaction L-erythrulose 1-phosphate = D-erythrulose 4-phosphate. The protein operates within carbohydrate metabolism; erythritol degradation. Functionally, catalyzes the isomerization of D-erythrulose-4P to L-erythrulose-1P. This chain is L-erythrulose-1-phosphate isomerase, found in Brucella melitensis biotype 1 (strain ATCC 23456 / CCUG 17765 / NCTC 10094 / 16M).